The sequence spans 450 residues: Tubulin alpha-3 chain (450 aa).

Positions 11, 71, 144, 145, 179, 206, and 228 each coordinate GTP. Glu71 is a binding site for Mg(2+). The active site involves Glu254.

The protein belongs to the tubulin family. Dimer of alpha and beta chains. A typical microtubule is a hollow water-filled tube with an outer diameter of 25 nm and an inner diameter of 15 nM. Alpha-beta heterodimers associate head-to-tail to form protofilaments running lengthwise along the microtubule wall with the beta-tubulin subunit facing the microtubule plus end conferring a structural polarity. Microtubules usually have 13 protofilaments but different protofilament numbers can be found in some organisms and specialized cells. Mg(2+) is required as a cofactor. In terms of processing, undergoes a tyrosination/detyrosination cycle, the cyclic removal and re-addition of a C-terminal tyrosine residue by the enzymes tubulin tyrosine carboxypeptidase (TTCP) and tubulin tyrosine ligase (TTL), respectively.

Its subcellular location is the cytoplasm. It is found in the cytoskeleton. It catalyses the reaction GTP + H2O = GDP + phosphate + H(+). Functionally, tubulin is the major constituent of microtubules, a cylinder consisting of laterally associated linear protofilaments composed of alpha- and beta-tubulin heterodimers. Microtubules grow by the addition of GTP-tubulin dimers to the microtubule end, where a stabilizing cap forms. Below the cap, tubulin dimers are in GDP-bound state, owing to GTPase activity of alpha-tubulin. In Eleusine indica (Goosegrass), this protein is Tubulin alpha-3 chain (TUBA3).